A 577-amino-acid polypeptide reads, in one-letter code: Pentatricopeptide repeat-containing protein At1g06143 (577 aa).

12 PPR repeats span residues 59–89 (DCRL…MQEP), 90–124 (NVFV…SVSP), 125–155 (SSYT…KFGF), 158–192 (HVKI…DDIA), 193–219 (WTTM…MSEK), 220–250 (NEAT…MPVK), 251–285 (DIIS…GIIP), 286–320 (DEVT…GFVL), 321–351 (DVYI…LPKK), 352–386 (NLFC…SVKP), 387–417 (NAVT…MIDD), and 423–453 (NVEH…MEFE). Residues 458 to 534 (IWGALLDGCR…CPGTSSIRID (77 aa)) are type E motif. Positions 535–565 (KRDHLFAAADKSHSASDEVCLLLDEIYDQMG) are type E(+) motif.

The protein belongs to the PPR family. PCMP-E subfamily.

The sequence is that of Pentatricopeptide repeat-containing protein At1g06143 (EMB1444) from Arabidopsis thaliana (Mouse-ear cress).